The sequence spans 63 residues: Parvalbumin alpha (63 aa).

2 consecutive EF-hand domains span residues 28–38 (IEEEELGLILK) and 39–63 (VLLAAGDKDGDGKIGVDEFVTLVSE). Residues E29, E32, D45, D47, D49, K51, and E56 each coordinate Ca(2+).

In terms of tissue distribution, detected in muscle and cutaneous mucus. In the skin, detected in cells in the basal region of the glandular epithelium of the dermal mucus glands (at protein level).

The protein resides in the cytoplasm. The protein localises to the secreted. In terms of biological role, in muscle, parvalbumin is thought to be involved in relaxation after contraction. It binds two calcium ions. The polypeptide is Parvalbumin alpha (Rana temporaria (European common frog)).